Reading from the N-terminus, the 203-residue chain is MNPEYDYLFKLLLIGDSGVGKSCLLLRFSDDSYVESYISTIGVDFKIRTVEQDGKTIKLQIWDTAGQERFRTITSSYYRGAHGIIIVYDVTDEESFNNVKQWLSEIDRYASDNVNKLLVGNKSDLTENRAIPYETAKAFADEIGIPFMETSAKDATNVEQAFMAMSASIKERMASQPAGNNARPPTVQIRGQPVAQKNGCCST.

GTP is bound by residues 15–23, 33–40, 63–67, 121–124, and 151–153; these read GDSGVGKSC, YVESYIST, DTAGQ, NKSD, and SAK. The Effector region motif lies at 37–45; sequence YISTIGVDF. The tract at residues 176–203 is disordered; sequence QPAGNNARPPTVQIRGQPVAQKNGCCST. Residues Cys-200 and Cys-201 are each lipidated (S-geranylgeranyl cysteine).

The protein belongs to the small GTPase superfamily. Rab family. In terms of assembly, does not interact with GC5.

Its subcellular location is the golgi apparatus. It localises to the trans-Golgi network membrane. The protein resides in the golgi apparatus membrane. Protein transport. Regulator of membrane traffic from the Golgi apparatus towards the endoplasmic reticulum (ER). The protein is Ras-related protein RABD2a (RABD2A) of Arabidopsis thaliana (Mouse-ear cress).